A 70-amino-acid polypeptide reads, in one-letter code: MDKRLLEILVCPVCKGGLIYLREQQELVCLADKLAYPIRDDIPVMLDSEARRLSLEEYDALRQRRAAPVA.

Belongs to the UPF0434 family.

This is UPF0434 protein MCA0634 from Methylococcus capsulatus (strain ATCC 33009 / NCIMB 11132 / Bath).